Here is a 390-residue protein sequence, read N- to C-terminus: uncharacterized protein (390 aa).

It belongs to the glycosyltransferase group 1 family. Glycosyltransferase 4 subfamily.

This is an uncharacterized protein from Methanocaldococcus jannaschii (strain ATCC 43067 / DSM 2661 / JAL-1 / JCM 10045 / NBRC 100440) (Methanococcus jannaschii).